We begin with the raw amino-acid sequence, 274 residues long: MEARSKLLDGTTASRRWTRKLVLLLPPLLLFLLRTESLQGLESDERFRTRENECHFYAGGQVYPGEASRVSVADHSLHLSKAKISKPAPYWEGTAVINGEFKELKLTDYRGKYLVFFFYPLDFTFVCPTEIIAFGDRIEEFKSINTEVVACSVDSQFTHLAWINTPRRQGGLGPIRIPLLSDLNHQISKDYGVYLEDSGHTLRGLFIIDDKGVLRQITLNDLPVGRSVDETLRLVQAFQYTDKHGEVCPAGWKPGSETIIPDPAGKLKYFDKLN.

An N-terminal signal peptide occupies residues 1–40 (MEARSKLLDGTTASRRWTRKLVLLLPPLLLFLLRTESLQG). The Thioredoxin domain maps to 82 to 240 (AKISKPAPYW…TLRLVQAFQY (159 aa)). Catalysis depends on Cys-127, which acts as the Cysteine sulfenic acid (-SOH) intermediate.

The protein belongs to the peroxiredoxin family. AhpC/Prx1 subfamily. As to quaternary structure, homodimer; disulfide-linked, upon oxidation. 5 homodimers assemble to form a ring-like decamer. Post-translationally, the enzyme can be inactivated by further oxidation of the cysteine sulfenic acid (C(P)-SOH) to sulphinic acid (C(P)-SO2H) and sulphonic acid (C(P)-SO3H) instead of its condensation to a disulfide bond.

The protein localises to the cytoplasm. The protein resides in the endoplasmic reticulum. The enzyme catalyses a hydroperoxide + [thioredoxin]-dithiol = an alcohol + [thioredoxin]-disulfide + H2O. Thiol-specific peroxidase that catalyzes the reduction of hydrogen peroxide and organic hydroperoxides to water and alcohols, respectively. Plays a role in cell protection against oxidative stress by detoxifying peroxides and as sensor of hydrogen peroxide-mediated signaling events. Regulates the activation of NF-kappa-B in the cytosol by a modulation of I-kappa-B-alpha phosphorylation. This Mus musculus (Mouse) protein is Peroxiredoxin-4 (Prdx4).